The primary structure comprises 336 residues: Dihydroorotate dehydrogenase (quinone) (336 aa).

FMN-binding positions include 62–66 and Thr-86; that span reads AGLDK. Lys-66 contributes to the substrate binding site. 111-115 lines the substrate pocket; sequence NRMGF. The FMN site is built by Asn-139 and Asn-172. Residue Asn-172 participates in substrate binding. Ser-175 acts as the Nucleophile in catalysis. Residue Asn-177 participates in substrate binding. Lys-217 and Thr-245 together coordinate FMN. 246 to 247 is a binding site for substrate; sequence NT. FMN is bound by residues Gly-268, Gly-297, and 318 to 319; that span reads YS.

It belongs to the dihydroorotate dehydrogenase family. Type 2 subfamily. Monomer. FMN is required as a cofactor.

The protein localises to the cell membrane. It carries out the reaction (S)-dihydroorotate + a quinone = orotate + a quinol. Its pathway is pyrimidine metabolism; UMP biosynthesis via de novo pathway; orotate from (S)-dihydroorotate (quinone route): step 1/1. Its function is as follows. Catalyzes the conversion of dihydroorotate to orotate with quinone as electron acceptor. The sequence is that of Dihydroorotate dehydrogenase (quinone) from Vibrio atlanticus (strain LGP32) (Vibrio splendidus (strain Mel32)).